The sequence spans 96 residues: Co-chaperonin GroES (96 aa).

This sequence belongs to the GroES chaperonin family. In terms of assembly, heptamer of 7 subunits arranged in a ring. Interacts with the chaperonin GroEL.

It is found in the cytoplasm. Functionally, together with the chaperonin GroEL, plays an essential role in assisting protein folding. The GroEL-GroES system forms a nano-cage that allows encapsulation of the non-native substrate proteins and provides a physical environment optimized to promote and accelerate protein folding. GroES binds to the apical surface of the GroEL ring, thereby capping the opening of the GroEL channel. The sequence is that of Co-chaperonin GroES from Streptococcus pyogenes serotype M18 (strain MGAS8232).